Here is a 281-residue protein sequence, read N- to C-terminus: 2-dehydro-3-deoxyphosphooctonate aldolase (281 aa).

It belongs to the KdsA family.

The protein resides in the cytoplasm. The enzyme catalyses D-arabinose 5-phosphate + phosphoenolpyruvate + H2O = 3-deoxy-alpha-D-manno-2-octulosonate-8-phosphate + phosphate. It participates in carbohydrate biosynthesis; 3-deoxy-D-manno-octulosonate biosynthesis; 3-deoxy-D-manno-octulosonate from D-ribulose 5-phosphate: step 2/3. Its pathway is bacterial outer membrane biogenesis; lipopolysaccharide biosynthesis. The chain is 2-dehydro-3-deoxyphosphooctonate aldolase from Pseudomonas savastanoi pv. phaseolicola (strain 1448A / Race 6) (Pseudomonas syringae pv. phaseolicola (strain 1448A / Race 6)).